Reading from the N-terminus, the 336-residue chain is DNA repair protein XRCC4 (336 aa).

The segment at Met1–Gly213 is interaction with IFFO1. A Phosphoserine; by PRKDC modification is found at Ser53. Coiled-coil stretches lie at residues Leu131–Cys165 and Leu184–Glu212. The interval Phe180 to Gly213 is interaction with LIG4. Ser193 is modified (phosphoserine; by PRKDC). Residue Lys210 forms a Glycyl lysine isopeptide (Lys-Gly) (interchain with G-Cter in SUMO) linkage. Residues Glu212–Ala249 are disordered. The residue at position 229 (Tyr229) is a Phosphotyrosine. Positions Tyr229 to Asn239 are enriched in acidic residues. A Phosphoserine modification is found at Ser232. Thr233 carries the post-translational modification Phosphothreonine; by CK2. Residues Ser237 and Ser256 each carry the phosphoserine modification. Position 260 is a phosphoserine; by PRKDC (Ser260). Residues Thr264–Ile336 form a disordered region. A Nuclear localization signal motif is present at residues Arg270–Arg275. Lys296 is covalently cross-linked (Glycyl lysine isopeptide (Lys-Gly) (interchain with G-Cter in ubiquitin)). A phosphoserine; by PRKDC mark is found at Ser303, Ser304, Ser315, and Ser320. A compositionally biased stretch (polar residues) spans Glu317–Pro329. Position 323 is a phosphothreonine; by PRKDC (Thr323). A phosphoserine; by PRKDC mark is found at Ser327 and Ser328.

The protein belongs to the XRCC4-XLF family. XRCC4 subfamily. Homodimer and homotetramer in solution. Interacts with NHEJ1/XLF; the interaction is direct and is mediated via a head-to-head interaction between N-terminal head regions. Interacts with LIG4; the LIG4-XRCC4 subcomplex has a 1:2 stoichiometry and XRCC4 is required for LIG4 stability. Component of the core long-range non-homologous end joining (NHEJ) complex (also named DNA-PK complex) composed of PRKDC, LIG4, XRCC4, XRCC6/Ku70, XRCC5/Ku86 and NHEJ1/XLF. Additional component of the NHEJ complex includes PAXX. Following autophosphorylation, PRKDC dissociates from DNA, leading to formation of the short-range NHEJ complex, composed of LIG4, XRCC4, XRCC6/Ku70, XRCC5/Ku86 and NHEJ1/XLF. Interacts with PRKDC; the interaction is direct. Interacts with XRCC6/Ku70; the interaction is direct. Interacts with APTX and APLF. Forms a heterotetramer with IFFO1; the interaction involves LIG4-free XRCC4 and leads to the relocalization of IFFO1 to the sites of DNA damage. Interacts with PNKP; mainly interacts with PNKP when phosphorylated at Thr-233, but is also able to interact at much lower level with PNKP when not unphosphorylated. Interacts with POLL (DNA polymerase lambda). In terms of assembly, interacts with XKR4; interacts with the processed form of XKR4, which is cleaved by caspase. Phosphorylated by PRKDC at the C-terminus in response to DNA damage; Ser-260 and Ser-320 constitute the main phosphorylation sites. Phosphorylations by PRKDC at the C-terminus of XRCC4 and NHEJ1/XLF are highly redundant and regulate ability of the XRCC4-NHEJ1/XLF subcomplex to bridge DNA. Phosphorylation by PRKDC does not prevent interaction with NHEJ1/XLF but disrupts ability to bridge DNA and promotes detachment from DNA. Phosphorylation at Ser-327 and Ser-328 by PRKDC promotes recognition by the SCF(FBXW7) complex and subsequent ubiquitination via 'Lys-63'-linked ubiquitin. Phosphorylation at Thr-233 by CK2 promotes interaction with PNKP; regulating PNKP activity and localization to DNA damage sites. Phosphorylation by CK2 promotes interaction with APTX. Post-translationally, ubiquitinated at Lys-296 by the SCF(FBXW7) complex via 'Lys-63'-linked ubiquitination, thereby promoting double-strand break repair: the SCF(FBXW7) complex specifically recognizes XRCC4 when phosphorylated at Ser-327 and Ser-328 by PRKDC, and 'Lys-63'-linked ubiquitination facilitates DNA non-homologous end joining (NHEJ) by enhancing association with XRCC5/Ku80 and XRCC6/Ku70. Monoubiquitinated. In terms of processing, undergoes proteolytic processing by caspase-3 (CASP3). This generates the protein XRCC4, C-terminus (XRCC4/C), which translocates to the cytoplasm and activates phospholipid scramblase activity of XKR4, thereby promoting phosphatidylserine exposure on apoptotic cell surface. Widely expressed.

The protein localises to the nucleus. Its subcellular location is the chromosome. The protein resides in the cytoplasm. Its function is as follows. DNA non-homologous end joining (NHEJ) core factor, required for double-strand break repair and V(D)J recombination. Acts as a scaffold protein that regulates recruitment of other proteins to DNA double-strand breaks (DSBs). Associates with NHEJ1/XLF to form alternating helical filaments that bridge DNA and act like a bandage, holding together the broken DNA until it is repaired. The XRCC4-NHEJ1/XLF subcomplex binds to the DNA fragments of a DSB in a highly diffusive manner and robustly bridges two independent DNA molecules, holding the broken DNA fragments in close proximity to one other. The mobility of the bridges ensures that the ends remain accessible for further processing by other repair factors. Plays a key role in the NHEJ ligation step of the broken DNA during DSB repair via direct interaction with DNA ligase IV (LIG4): the LIG4-XRCC4 subcomplex reseals the DNA breaks after the gap filling is completed. XRCC4 stabilizes LIG4, regulates its subcellular localization and enhances LIG4's joining activity. Binding of the LIG4-XRCC4 subcomplex to DNA ends is dependent on the assembly of the DNA-dependent protein kinase complex DNA-PK to these DNA ends. Promotes displacement of PNKP from processed strand break termini. In terms of biological role, acts as an activator of the phospholipid scramblase activity of XKR4. This form, which is generated upon caspase-3 (CASP3) cleavage, translocates into the cytoplasm and interacts with XKR4, thereby promoting phosphatidylserine scramblase activity of XKR4 and leading to phosphatidylserine exposure on apoptotic cell surface. The sequence is that of DNA repair protein XRCC4 from Homo sapiens (Human).